The following is a 770-amino-acid chain: Proton-coupled zinc antiporter SLC30A5 (770 aa).

At 1 to 29 the chain is on the cytoplasmic side; sequence MEEKYSSQALAGGGVLGPVDVPSARLTRY. The chain crosses the membrane as a helical span at residues 30-50; sequence IVLLCFAKFLKAVGLFESYDL. Residues 51–53 lie on the Lumenal side of the membrane; that stretch reads LKA. A helical membrane pass occupies residues 54–74; sequence VHLVQFIFIVKLGSAFFMVLF. Topologically, residues 75-95 are cytoplasmic; that stretch reads QKPFSSGKVVTKHQWIKIFKH. The helical transmembrane segment at 96-116 threads the bilayer; that stretch reads AVVGCIISLLWFFGLTLCGPL. A topological domain (lumenal) is located at residue Arg117. A helical membrane pass occupies residues 118 to 138; sequence TLLLFEHSDVVVLSLLSVLFT. Topologically, residues 139–149 are cytoplasmic; sequence SSGGGPAKTRG. A helical transmembrane segment spans residues 150–170; the sequence is AAFFIIAVICLLLFDNDDLMA. At 171 to 190 the chain is on the lumenal side; the sequence is KIAEHPEGHHDSALTHVLYT. A helical membrane pass occupies residues 191–211; sequence VIAFLGVADHKGGVLLLVLAL. At 212-235 the chain is on the cytoplasmic side; it reads CCKVGFHMASRKLSVDVGGAKRLQ. The chain crosses the membrane as a helical span at residues 236–256; that stretch reads ALSHLVSVLLLCPWVIVLSLT. At 257 to 264 the chain is on the lumenal side; it reads TESKVESW. The helical transmembrane segment at 265-285 threads the bilayer; the sequence is SSLIMPFITVIFFVVILDFYV. At 286 to 300 the chain is on the cytoplasmic side; the sequence is ESICSVKMESSKCAR. A helical membrane pass occupies residues 301 to 321; the sequence is YGSFLIFISALLFGNFWTHPI. Over 322–339 the chain is Lumenal; that stretch reads TDQLRAMNKPAHHESTEH. The helical transmembrane segment at 340-360 threads the bilayer; the sequence is VLSGGVVVSAVFFILSANILS. Topologically, residues 361-415 are cytoplasmic; the sequence is SPSRKGQKGTLIGYSPEGTPLYNFMGDAIQQSSQSLPRFIKESLKQILEEYDSRQ. A helical transmembrane segment spans residues 416–436; the sequence is IFYFLCLNLAFTFVELFYGVW. Residues 437 to 445 are Lumenal-facing; it reads TNSLGLISD. The helical transmembrane segment at 446 to 466 threads the bilayer; that stretch reads GFHMLFDCSALVMGLFAALMT. Zn(2+) contacts are provided by His448 and Asp452. Residues 467 to 480 are Cytoplasmic-facing; the sequence is RWKATRIFSYGYGR. The chain crosses the membrane as a helical span at residues 481 to 501; it reads VEILSGFINGLFLMVIAFFVF. The Lumenal segment spans residues 502 to 517; sequence MESVARLVDPPDIDTN. The chain crosses the membrane as a helical span at residues 518–538; that stretch reads MLTPVSVGGLIVNLVGICAFS. The interval 539–579 is his-rich loop; required for zinc transport; it reads HAHSHGASRGGCHSHEHSHSYHGHSHSHGHGHSHNDHGHSH. Residues 539–597 are Cytoplasmic-facing; the sequence is HAHSHGASRGGCHSHEHSHSYHGHSHSHGHGHSHNDHGHSHGHSHVSSGGGMNTNMRGV. A disordered region spans residues 548–586; it reads GGCHSHEHSHSYHGHSHSHGHGHSHNDHGHSHGHSHVSS. The segment covering 558–570 has biased composition (basic residues); it reads SYHGHSHSHGHGH. The helical transmembrane segment at 598-618 threads the bilayer; that stretch reads FLHVLADTLGSVGVIVSTTFI. Positions 600 and 604 each coordinate Zn(2+). Topologically, residues 619–622 are lumenal; the sequence is QQFG. Residues 623–643 form a helical membrane-spanning segment; it reads WLIADPLCSLFIATLIFLSVI. The Cytoplasmic portion of the chain corresponds to 644–770; the sequence is PLLKDACQVL…KYYKDGTYIM (127 aa).

Belongs to the cation diffusion facilitator (CDF) transporter (TC 2.A.4) family. SLC30A subfamily. As to quaternary structure, heterodimer with SLC30A6/ZNT6; form a functional zinc ion transmembrane transporter.

The protein localises to the golgi apparatus. It is found in the golgi stack membrane. It localises to the cytoplasmic vesicle. The protein resides in the COPII-coated vesicle membrane. Its subcellular location is the secretory vesicle membrane. The protein localises to the trans-Golgi network membrane. It catalyses the reaction Zn(2+)(in) + 2 H(+)(out) = Zn(2+)(out) + 2 H(+)(in). Its function is as follows. Together with SLC30A6 forms a functional proton-coupled zinc ion antiporter mediating zinc entry into the lumen of organelles along the secretory pathway. By contributing to zinc ion homeostasis within the early secretory pathway, regulates the activation and folding of enzymes like alkaline phosphatases and enzymes involved in phosphatidylinositol glycan anchor biosynthesis. The polypeptide is Proton-coupled zinc antiporter SLC30A5 (Gallus gallus (Chicken)).